A 327-amino-acid chain; its full sequence is Gonadotropin-releasing hormone receptor (327 aa).

Residues 1–37 are Extracellular-facing; it reads MASASPEQNQNHCSAVNNSNMLMQGNLPTLTLSGKIR. Asn17 carries an N-linked (GlcNAc...) asparagine glycan. The chain crosses the membrane as a helical span at residues 38–57; the sequence is VTVTFFLFLLSTIFNASFLL. At 58–76 the chain is on the cytoplasmic side; sequence KLQKWTQKKEKGKKLSRMK. The helical transmembrane segment at 77 to 96 threads the bilayer; sequence VLLKHLTLANLLETLIVMPL. At 97-114 the chain is on the extracellular side; sequence DGMWNITVQWYAGEFLCK. Residue Asn101 is glycosylated (N-linked (GlcNAc...) asparagine). Cys113 and Cys195 are disulfide-bonded. A helical transmembrane segment spans residues 115–136; it reads VLSYLKLFSMYAPAFMMVVISL. Residues 137–163 are Cytoplasmic-facing; sequence DRSLAITRPLAMKNNGKLGQSMIGLAW. A helical transmembrane segment spans residues 164–183; it reads LLSGIFAGPQLYIFRMIHLA. The Extracellular segment spans residues 184–211; it reads DSSGQTEGFPQCVTHCSFPQWWHQAFYN. The helical transmembrane segment at 212–231 threads the bilayer; the sequence is FFTFSCLFIIPLFITLICNA. Topologically, residues 232 to 280 are cytoplasmic; it reads KIIFTLTRVLHQDPHELQLNQSKNNIPRARLRTLKMTVAFATSFTVCWT. A helical membrane pass occupies residues 281 to 299; that stretch reads PYYVLGIWYWFDPEMLNRV. Topologically, residues 300 to 305 are extracellular; that stretch reads SDPVNH. The helical transmembrane segment at 306 to 325 threads the bilayer; it reads FFFLFALLNPCFDPLIYGYF. Residues 326 to 327 lie on the Cytoplasmic side of the membrane; sequence SL.

Belongs to the G-protein coupled receptor 1 family.

Its subcellular location is the cell membrane. Its function is as follows. Receptor for gonadotropin releasing hormone (GnRH) that mediates the action of GnRH to stimulate the secretion of the gonadotropic hormones luteinizing hormone (LH) and follicle-stimulating hormone (FSH). This receptor mediates its action by association with G-proteins that activate a phosphatidylinositol-calcium second messenger system. In Canis lupus familiaris (Dog), this protein is Gonadotropin-releasing hormone receptor (GNRHR).